Consider the following 231-residue polypeptide: Uracil phosphoribosyltransferase (231 aa).

38 to 42 (KGLVR) provides a ligand contact to GTP. Residues Arg-87, Arg-112, and 140–148 (DPMIATGST) each bind 5-phospho-alpha-D-ribose 1-diphosphate. Uracil is bound by residues Ile-203 and 208-210 (GDA). A 5-phospho-alpha-D-ribose 1-diphosphate-binding site is contributed by Asp-209.

This sequence belongs to the UPRTase family. Mg(2+) serves as cofactor.

It carries out the reaction UMP + diphosphate = 5-phospho-alpha-D-ribose 1-diphosphate + uracil. It participates in pyrimidine metabolism; UMP biosynthesis via salvage pathway; UMP from uracil: step 1/1. Allosterically activated by GTP. Catalyzes the conversion of uracil and 5-phospho-alpha-D-ribose 1-diphosphate (PRPP) to UMP and diphosphate. In Methanococcus maripaludis (strain DSM 14266 / JCM 13030 / NBRC 101832 / S2 / LL), this protein is Uracil phosphoribosyltransferase.